The chain runs to 137 residues: Small ribosomal subunit protein uS12 (137 aa).

2 disordered regions span residues 1 to 21 (MPTINQLVRKPRKSKIEKSDS) and 34 to 57 (VHTKLAAPQKRGVATRVGTMTPKK). Asp102 is subject to 3-methylthioaspartic acid.

This sequence belongs to the universal ribosomal protein uS12 family. In terms of assembly, part of the 30S ribosomal subunit. Contacts proteins S8 and S17. May interact with IF1 in the 30S initiation complex.

Functionally, with S4 and S5 plays an important role in translational accuracy. Interacts with and stabilizes bases of the 16S rRNA that are involved in tRNA selection in the A site and with the mRNA backbone. Located at the interface of the 30S and 50S subunits, it traverses the body of the 30S subunit contacting proteins on the other side and probably holding the rRNA structure together. The combined cluster of proteins S8, S12 and S17 appears to hold together the shoulder and platform of the 30S subunit. In Streptococcus equi subsp. zooepidemicus (strain H70), this protein is Small ribosomal subunit protein uS12.